The chain runs to 231 residues: Putative aminodeoxychorismate lyase (231 aa).

The protein belongs to the class-IV pyridoxal-phosphate-dependent aminotransferase family. Requires pyridoxal 5'-phosphate as cofactor.

The protein localises to the cytoplasm. It is found in the nucleus. It carries out the reaction 4-amino-4-deoxychorismate = 4-aminobenzoate + pyruvate + H(+). It participates in cofactor biosynthesis; tetrahydrofolate biosynthesis; 4-aminobenzoate from chorismate: step 2/2. In terms of biological role, converts 4-amino-4-deoxychorismate into 4-aminobenzoate (PABA) and pyruvate. The protein is Putative aminodeoxychorismate lyase of Schizosaccharomyces pombe (strain 972 / ATCC 24843) (Fission yeast).